The following is a 214-amino-acid chain: Protein FAM167A (214 aa).

2 disordered regions span residues 1 to 26 (MSVPQIHVEEVGAEEGAGAAAPPDDH) and 59 to 108 (PFPR…LSTG). Residues 118 to 156 (EAIAWLRKELTEMRLQDQQLARQLMRLRGDINKLKIEHT) are a coiled coil.

The protein belongs to the FAM167 (SEC) family. Expressed in skin, including primary keratinocytes, spleen, kidney, leukocytes, testis, lung, small intestine and prostate.

This Homo sapiens (Human) protein is Protein FAM167A (FAM167A).